Consider the following 345-residue polypeptide: Phosphoribosylformylglycinamidine cyclo-ligase (345 aa).

It belongs to the AIR synthase family.

The protein localises to the cytoplasm. The catalysed reaction is 2-formamido-N(1)-(5-O-phospho-beta-D-ribosyl)acetamidine + ATP = 5-amino-1-(5-phospho-beta-D-ribosyl)imidazole + ADP + phosphate + H(+). Its pathway is purine metabolism; IMP biosynthesis via de novo pathway; 5-amino-1-(5-phospho-D-ribosyl)imidazole from N(2)-formyl-N(1)-(5-phospho-D-ribosyl)glycinamide: step 2/2. The polypeptide is Phosphoribosylformylglycinamidine cyclo-ligase (Histophilus somni (strain 2336) (Haemophilus somnus)).